A 141-amino-acid chain; its full sequence is Vasotocin-neurophysin VT (141 aa).

Cys1 and Cys6 are oxidised to a cystine. A Glycine amide modification is found at Gly9. 7 cysteine pairs are disulfide-bonded: Cys22-Cys66, Cys25-Cys39, Cys33-Cys56, Cys40-Cys46, Cys73-Cys85, Cys79-Cys97, and Cys86-Cys91. Asn117 is a glycosylation site (N-linked (GlcNAc...) asparagine).

It belongs to the vasopressin/oxytocin family. Seven disulfide bonds are present in neurophysin.

The protein localises to the secreted. Its function is as follows. Vasotocin is an antidiuretic hormone. The sequence is that of Vasotocin-neurophysin VT from Pelophylax lessonae (Pool frog).